Reading from the N-terminus, the 168-residue chain is MLVYQDLLTGDELLSDSFPYKEIHNGMLWEVEGKWVIQGAVNVDIGANPSAEGGEEDEGVDDQAVKVVDIVDTFRLQEQPAFDKKQFVTFMKRYIKNLTPKLDAEKQELFKKHIEGATKFLLSKLSDLQFFVGESMHDDGCLVFAYYKDGATDPTFLYFAYGLKEIKC.

One can recognise a TCTP domain in the interval 1-168; the sequence is MLVYQDLLTG…FAYGLKEIKC (168 aa).

Belongs to the TCTP family.

The protein localises to the cytoplasm. Its function is as follows. Involved in calcium binding and microtubule stabilization. This is Translationally-controlled tumor protein homolog (TCTP) from Elaeis guineensis var. tenera (Oil palm).